The chain runs to 479 residues: Probable phosphatidate cytidylyltransferase (479 aa).

The segment covering 1–28 (MRTDNIRNRKEQLKKQEKKDFDSSKDEE) has biased composition (basic and acidic residues). The tract at residues 1 to 71 (MRTDNIRNRK…NNNNNNNNIK (71 aa)) is disordered. The Cytoplasmic portion of the chain corresponds to 1–108 (MRTDNIRNRK…LAIRSVMGAF (108 aa)). Over residues 53–69 (NKNIINQKTNNNNNNNN) the composition is skewed to low complexity. A helical membrane pass occupies residues 109 to 129 (MIGFFTIVLSTDHFIVALFVI). The Extracellular segment spans residues 130 to 159 (ALQLLVFKEMIALRYIEAKEKKIPHFRTLN). A helical membrane pass occupies residues 160–180 (WFFLFTSFFFFYAKPILITLA). The Cytoplasmic portion of the chain corresponds to 181 to 192 (NYYPDIFQHFVR). Residues 193 to 213 (YHLWHSFSLYCIGFVLFILTL) form a helical membrane-spanning segment. Topologically, residues 214-240 (RKGVYRYQFSQLTWTLMILMMVVVQSN) are extracellular. Residues 241-261 (FLISNIYQGLIWFILPVSIIV) form a helical membrane-spanning segment. At 262 to 293 (CNDIFAYFNGFFLGKKFINRPLMKISPNKTWE) the chain is on the cytoplasmic side. Residues 294–314 (GFIGATGWTLLFAYYFCGFLL) form a helical membrane-spanning segment. The Extracellular portion of the chain corresponds to 315–375 (KYDWIVCPKG…FTYIPIQFHA (61 aa)). A helical membrane pass occupies residues 376–396 (LVLALFGSLIAPFGGFFASGI). Over 397–479 (KRAYKVKDFD…IEFTTGTITA (83 aa)) the chain is Cytoplasmic.

It belongs to the CDS family.

It is found in the membrane. The enzyme catalyses a 1,2-diacyl-sn-glycero-3-phosphate + CTP + H(+) = a CDP-1,2-diacyl-sn-glycerol + diphosphate. It participates in phospholipid metabolism; CDP-diacylglycerol biosynthesis; CDP-diacylglycerol from sn-glycerol 3-phosphate: step 3/3. This is Probable phosphatidate cytidylyltransferase (cdsA) from Dictyostelium discoideum (Social amoeba).